The sequence spans 225 residues: Cytidylate kinase (225 aa).

11–19 (GPAAAGKST) contributes to the ATP binding site.

Belongs to the cytidylate kinase family. Type 1 subfamily.

It localises to the cytoplasm. It catalyses the reaction CMP + ATP = CDP + ADP. It carries out the reaction dCMP + ATP = dCDP + ADP. The protein is Cytidylate kinase of Bacillus cereus (strain AH187).